The following is a 277-amino-acid chain: Phosphoenolpyruvate synthase regulatory protein (277 aa).

Position 157–164 (157–164) interacts with ADP; sequence GVSRCGKT.

Belongs to the pyruvate, phosphate/water dikinase regulatory protein family. PSRP subfamily.

It catalyses the reaction [pyruvate, water dikinase] + ADP = [pyruvate, water dikinase]-phosphate + AMP + H(+). The enzyme catalyses [pyruvate, water dikinase]-phosphate + phosphate + H(+) = [pyruvate, water dikinase] + diphosphate. Bifunctional serine/threonine kinase and phosphorylase involved in the regulation of the phosphoenolpyruvate synthase (PEPS) by catalyzing its phosphorylation/dephosphorylation. The protein is Phosphoenolpyruvate synthase regulatory protein of Escherichia coli O6:K15:H31 (strain 536 / UPEC).